The primary structure comprises 330 residues: Methylthioribose-1-phosphate isomerase (330 aa).

Substrate is bound by residues 49 to 51 (RGA), arginine 83, and glutamine 179. The Proton donor role is filled by aspartate 220. 230–231 (NK) contacts substrate.

The protein belongs to the eIF-2B alpha/beta/delta subunits family. MtnA subfamily.

The enzyme catalyses 5-(methylsulfanyl)-alpha-D-ribose 1-phosphate = 5-(methylsulfanyl)-D-ribulose 1-phosphate. It functions in the pathway amino-acid biosynthesis; L-methionine biosynthesis via salvage pathway; L-methionine from S-methyl-5-thio-alpha-D-ribose 1-phosphate: step 1/6. In terms of biological role, catalyzes the interconversion of methylthioribose-1-phosphate (MTR-1-P) into methylthioribulose-1-phosphate (MTRu-1-P). This is Methylthioribose-1-phosphate isomerase from Thermus thermophilus (strain ATCC BAA-163 / DSM 7039 / HB27).